Consider the following 327-residue polypeptide: Methionine import ATP-binding protein MetN (327 aa).

The region spanning 3 to 239 (VELKNIEKIY…PKHAVTKELL (237 aa)) is the ABC transporter domain. ATP is bound at residue 36 to 43 (GYSGAGKS).

It belongs to the ABC transporter superfamily. Methionine importer (TC 3.A.1.24) family. The complex is composed of two ATP-binding proteins (MetN), two transmembrane proteins (MetI) and a solute-binding protein (MetQ).

It is found in the cell inner membrane. It carries out the reaction L-methionine(out) + ATP + H2O = L-methionine(in) + ADP + phosphate + H(+). The catalysed reaction is D-methionine(out) + ATP + H2O = D-methionine(in) + ADP + phosphate + H(+). Part of the ABC transporter complex MetNIQ involved in methionine import. Responsible for energy coupling to the transport system. The chain is Methionine import ATP-binding protein MetN from Helicobacter pylori (strain HPAG1).